We begin with the raw amino-acid sequence, 310 residues long: Porphobilinogen deaminase (310 aa).

Residue Cys-242 is modified to S-(dipyrrolylmethanemethyl)cysteine.

Belongs to the HMBS family. Monomer. It depends on dipyrromethane as a cofactor.

The catalysed reaction is 4 porphobilinogen + H2O = hydroxymethylbilane + 4 NH4(+). The protein operates within porphyrin-containing compound metabolism; protoporphyrin-IX biosynthesis; coproporphyrinogen-III from 5-aminolevulinate: step 2/4. Functionally, tetrapolymerization of the monopyrrole PBG into the hydroxymethylbilane pre-uroporphyrinogen in several discrete steps. The chain is Porphobilinogen deaminase from Shewanella sp. (strain ANA-3).